Consider the following 273-residue polypeptide: MSSLREEIRSALDVSPTIDPAAEVSRRVGFLKDYLRASSTKGFVLGISGGQDSALAGRLCQLAAQESRLEGVAAEFIAVRLPYGVQADEEDAQVALRFIDPDRTIVINIKETSDAATKAVAEALGETPTDFVRGNIKARERMVVQYAAAGQHRLLVVGTDHAAEAVTGFFTKFGDGGVDVTPLTGLTKRQGAQILSHLGAPDSISHKVPTADLEDDRPALPDEVALGVTYAQIDDYLEGKAVTVEAADRIERWYLQTRHKRAQPVTPFDGWWR.

46 to 53 (GISGGQDS) contributes to the ATP binding site. Asp-52 is a binding site for Mg(2+). Residue Arg-139 participates in deamido-NAD(+) binding. Thr-159 serves as a coordination point for ATP. Glu-164 contributes to the Mg(2+) binding site. The deamido-NAD(+) site is built by Lys-172 and Asp-179. Positions 188 and 210 each coordinate ATP. 259-260 (HK) serves as a coordination point for deamido-NAD(+).

The protein belongs to the NAD synthetase family. Homodimer.

The catalysed reaction is deamido-NAD(+) + NH4(+) + ATP = AMP + diphosphate + NAD(+) + H(+). Its pathway is cofactor biosynthesis; NAD(+) biosynthesis; NAD(+) from deamido-NAD(+) (ammonia route): step 1/1. Catalyzes the ATP-dependent amidation of deamido-NAD to form NAD. Uses ammonia as a nitrogen source. The protein is NH(3)-dependent NAD(+) synthetase of Mycobacteroides abscessus (strain ATCC 19977 / DSM 44196 / CCUG 20993 / CIP 104536 / JCM 13569 / NCTC 13031 / TMC 1543 / L948) (Mycobacterium abscessus).